The following is a 281-amino-acid chain: Ribosomal RNA small subunit methyltransferase A (281 aa).

Residues Asn-24, Leu-26, Gly-51, Glu-72, Asp-96, and Asn-123 each contribute to the S-adenosyl-L-methionine site.

The protein belongs to the class I-like SAM-binding methyltransferase superfamily. rRNA adenine N(6)-methyltransferase family. RsmA subfamily.

It localises to the cytoplasm. It carries out the reaction adenosine(1518)/adenosine(1519) in 16S rRNA + 4 S-adenosyl-L-methionine = N(6)-dimethyladenosine(1518)/N(6)-dimethyladenosine(1519) in 16S rRNA + 4 S-adenosyl-L-homocysteine + 4 H(+). In terms of biological role, specifically dimethylates two adjacent adenosines (A1518 and A1519) in the loop of a conserved hairpin near the 3'-end of 16S rRNA in the 30S particle. May play a critical role in biogenesis of 30S subunits. This Ureaplasma urealyticum serovar 10 (strain ATCC 33699 / Western) protein is Ribosomal RNA small subunit methyltransferase A.